The chain runs to 329 residues: DNA repair protein RAD51 homolog 4 (329 aa).

The preferentially binds ssDNA stretch occupies residues 1–83; it reads MGMLRAGLCP…ELKTSTAILS (83 aa). The interaction with XRCC2 stretch occupies residues 4–77; sequence LRAGLCPGLT…GADLYEELKT (74 aa). Positions 77-328 are interaction with RAD51C; that stretch reads TSTAILSTGI…EQSPELPGKQ (252 aa). Residue 107–114 participates in ATP binding; the sequence is GGPGSGKT.

This sequence belongs to the RecA family. RAD51 subfamily. Part of the BCDX2 complex consisting of RAD51B, RAD51C, RAD51D and XRCC2; the complex has a ring-like structure arranged into a flat disc around a central channel. In the absence of DNA, the BCDX2 subcomplex XRCC2:RAD51D formed a multimeric ring structure; in the presence of single-stranded DNA it formed a filamentous structure with the ssDNA. Interacts with SWSAP1 and ZSWIM7; involved in homologous recombination repair. Interacts with BLM; required for stimulation of BLM activity by the BCDX2 subcomplex XRCC2:RAD51D. As to expression, highly expressed in brain followed by testis. Also expressed in heart, liver, kidney, spleen, lung and skeletal muscle.

Its subcellular location is the nucleus. The protein localises to the chromosome. It localises to the telomere. Functionally, involved in the homologous recombination repair (HRR) pathway of double-stranded DNA breaks arising during DNA replication or induced by DNA-damaging agents. Bind to single-stranded DNA (ssDNA) and has DNA-dependent ATPase activity. Part of the RAD51 paralog protein complex BCDX2 which acts in the BRCA1-BRCA2-dependent HR pathway. Upon DNA damage, BCDX2 acts downstream of BRCA2 recruitment and upstream of RAD51 recruitment. BCDX2 binds predominantly to the intersection of the four duplex arms of the Holliday junction and to junction of replication forks. The BCDX2 complex was originally reported to bind single-stranded DNA, single-stranded gaps in duplex DNA and specifically to nicks in duplex DNA. Involved in telomere maintenance. The BCDX2 subcomplex XRCC2:RAD51D can stimulate Holliday junction resolution by BLM. In Mus musculus (Mouse), this protein is DNA repair protein RAD51 homolog 4 (Rad51d).